The following is a 309-amino-acid chain: Histone-lysine N-methyltransferase SETMAR (309 aa).

Residues 74–137 enclose the Pre-SET domain; it reads PGCACIETPC…RCRNRVVQNG (64 aa). The Zn(2+) site is built by Cys-76, Cys-78, Cys-83, Cys-88, Cys-90, Cys-119, Cys-123, Cys-125, and Cys-129. Residues 140–264 form the SET domain; that stretch reads FLLQVFQTEK…PGEELSYDYS (125 aa). Residues 150–152, Tyr-193, Arg-221, and 224–225 each bind S-adenosyl-L-methionine; these read KGW and NH. Zn(2+) is bound by residues Cys-227, Cys-288, Cys-290, and Cys-295. Residues 284–300 form the Post-SET domain; that stretch reads PRKPCYCGAQSCTTFLP.

The protein belongs to the class V-like SAM-binding methyltransferase superfamily.

Its subcellular location is the nucleus. It is found in the chromosome. The catalysed reaction is L-lysyl(36)-[histone H3] + 2 S-adenosyl-L-methionine = N(6),N(6)-dimethyl-L-lysyl(36)-[histone H3] + 2 S-adenosyl-L-homocysteine + 2 H(+). Its function is as follows. Histone methyltransferase that methylates 'Lys-4' and 'Lys-36' of histone H3, 2 specific tags for epigenetic transcriptional activation. Specifically mediates dimethylation of H3 'Lys-36'. This chain is Histone-lysine N-methyltransferase SETMAR, found in Mus musculus (Mouse).